A 147-amino-acid chain; its full sequence is Myosin regulatory light chain (147 aa).

Residue Thr1 is modified to N-acetylthreonine. EF-hand domains lie at Ala2 to Asn37, Glu73 to Ala108, and Leu109 to Leu144. The Ca(2+) site is built by Asp15, Asp17, Asp19, Lys21, Glu26, Asp86, Asn90, Thr92, and Glu97.

The protein is Myosin regulatory light chain of Physarum polycephalum (Slime mold).